We begin with the raw amino-acid sequence, 249 residues long: tRNA pseudouridine synthase A (249 aa).

Aspartate 54 (nucleophile) is an active-site residue. Position 112 (tyrosine 112) interacts with substrate.

Belongs to the tRNA pseudouridine synthase TruA family. In terms of assembly, homodimer.

It carries out the reaction uridine(38/39/40) in tRNA = pseudouridine(38/39/40) in tRNA. In terms of biological role, formation of pseudouridine at positions 38, 39 and 40 in the anticodon stem and loop of transfer RNAs. The chain is tRNA pseudouridine synthase A from Latilactobacillus sakei subsp. sakei (strain 23K) (Lactobacillus sakei subsp. sakei).